Here is a 173-residue protein sequence, read N- to C-terminus: Ribosome maturation factor RimM (173 aa).

The PRC barrel domain maps to 96-169 (PDEFYDHQLE…LITIDPPDGL (74 aa)).

Belongs to the RimM family. As to quaternary structure, binds ribosomal protein uS19.

It is found in the cytoplasm. An accessory protein needed during the final step in the assembly of 30S ribosomal subunit, possibly for assembly of the head region. Essential for efficient processing of 16S rRNA. May be needed both before and after RbfA during the maturation of 16S rRNA. It has affinity for free ribosomal 30S subunits but not for 70S ribosomes. The chain is Ribosome maturation factor RimM from Mycolicibacterium gilvum (strain PYR-GCK) (Mycobacterium gilvum (strain PYR-GCK)).